A 232-amino-acid chain; its full sequence is Zinc-finger homeodomain protein 5 (232 aa).

Residues 1–11 show a composition bias toward acidic residues; it reads MELSEHEEDAG. Residues 1–25 are disordered; it reads MELSEHEEDAGDVGGGCSSPPTPPH. The ZF-HD dimerization-type; degenerate zinc finger occupies 40 to 86; it reads YHECLRNHAAASGGHVVDGCGEFMPASTEEPLACAACGCHRSFHRRD. The disordered stretch occupies residues 126–170; it reads GLPFPGYGTPSGGTGTTTASSSDERLRPSPVQPRRRSRTTFTREQ. The segment at residues 159 to 222 is a DNA-binding region (homeobox); sequence RRRSRTTFTR…NNKHSFKQKQ (64 aa).

In terms of assembly, homo- and heterodimer with other ZFHD proteins.

Its subcellular location is the nucleus. Its function is as follows. Putative transcription factor. The chain is Zinc-finger homeodomain protein 5 (ZHD5) from Oryza sativa subsp. indica (Rice).